The sequence spans 303 residues: Major fimbrium anchoring subunit FimB (303 aa).

Positions 1-22 (MNDAKKYIVSVLILLVAGMFGG) are cleaved as a signal peptide. Residue cysteine 23 is the site of N-palmitoyl cysteine attachment. The S-diacylglycerol cysteine moiety is linked to residue cysteine 23.

This sequence belongs to the bacteroidetes fimbrillin superfamily. FimB/Mfa2 family. As to quaternary structure, fimB is not part of the fimbrium itself, but anchors the fimbrium in the outer membrane. Linear, head-to-tail oligomerization of fimbrial subunits mediates assembly of the fimbrium stalk, while the minor components FimC, FimD and FimE probably form the fimbrium tip. The anchoring subunit FimB limits fimbrium length and is important for solid fimbrium attachment to the outer membrane. In its absence, the major fimbriae become very long and are easily detached from the membrane.

The protein resides in the cell outer membrane. Anchoring subunit of the major fimbriae. Regulates fimbrial length. These filamentous pili are attached to the cell surface; they mediate biofilm formation, adhesion onto host cells and onto other bacteria that are part of the oral microbiome. Fimbriae of P.gingivalis are major virulence factors. The sequence is that of Major fimbrium anchoring subunit FimB from Porphyromonas gingivalis (strain ATCC 33277 / DSM 20709 / CIP 103683 / JCM 12257 / NCTC 11834 / 2561).